Here is a 310-residue protein sequence, read N- to C-terminus: Ribose-phosphate pyrophosphokinase (310 aa).

ATP contacts are provided by residues 34–36 and 93–94; these read DQE and RQ. His127 and Asp167 together coordinate Mg(2+). Lys190 is a catalytic residue. D-ribose 5-phosphate contacts are provided by residues Arg192, Asp216, and 220–224; that span reads DSGGT.

It belongs to the ribose-phosphate pyrophosphokinase family. Class I subfamily. Homohexamer. Requires Mg(2+) as cofactor.

The protein localises to the cytoplasm. It carries out the reaction D-ribose 5-phosphate + ATP = 5-phospho-alpha-D-ribose 1-diphosphate + AMP + H(+). It functions in the pathway metabolic intermediate biosynthesis; 5-phospho-alpha-D-ribose 1-diphosphate biosynthesis; 5-phospho-alpha-D-ribose 1-diphosphate from D-ribose 5-phosphate (route I): step 1/1. Functionally, involved in the biosynthesis of the central metabolite phospho-alpha-D-ribosyl-1-pyrophosphate (PRPP) via the transfer of pyrophosphoryl group from ATP to 1-hydroxyl of ribose-5-phosphate (Rib-5-P). This chain is Ribose-phosphate pyrophosphokinase, found in Agrobacterium fabrum (strain C58 / ATCC 33970) (Agrobacterium tumefaciens (strain C58)).